Consider the following 29-residue polypeptide: 28 kDa protein (29 aa).

This Tritrichomonas foetus (Trichomonas foetus) protein is 28 kDa protein.